The sequence spans 255 residues: Small ribosomal subunit protein eS1 (255 aa).

Ala2 carries the N-acetylalanine; partial modification.

The protein belongs to the eukaryotic ribosomal protein eS1 family. In terms of assembly, component of the small ribosomal subunit. Mature ribosomes consist of a small (40S) and a large (60S) subunit. The 40S subunit contains about 33 different proteins and 1 molecule of RNA (18S). The 60S subunit contains about 49 different proteins and 3 molecules of RNA (25S, 5.8S and 5S).

The protein localises to the cytoplasm. The protein is Small ribosomal subunit protein eS1 of Arthroderma otae (strain ATCC MYA-4605 / CBS 113480) (Microsporum canis).